The primary structure comprises 232 residues: Urease accessory protein UreF (232 aa).

The protein belongs to the UreF family. UreD, UreF and UreG form a complex that acts as a GTP-hydrolysis-dependent molecular chaperone, activating the urease apoprotein by helping to assemble the nickel containing metallocenter of UreC. The UreE protein probably delivers the nickel.

It localises to the cytoplasm. Required for maturation of urease via the functional incorporation of the urease nickel metallocenter. The chain is Urease accessory protein UreF from Azorhizobium caulinodans (strain ATCC 43989 / DSM 5975 / JCM 20966 / LMG 6465 / NBRC 14845 / NCIMB 13405 / ORS 571).